A 585-amino-acid chain; its full sequence is Aspartate--tRNA ligase (585 aa).

Residue glutamate 173 participates in L-aspartate binding. Residues glutamine 197–lysine 200 form an aspartate region. Arginine 219 serves as a coordination point for L-aspartate. Residues arginine 219 to glutamate 221 and glutamine 228 contribute to the ATP site. Histidine 446 is a binding site for L-aspartate. Glutamate 480 lines the ATP pocket. Arginine 487 serves as a coordination point for L-aspartate. Glycine 532–arginine 535 serves as a coordination point for ATP.

It belongs to the class-II aminoacyl-tRNA synthetase family. Type 1 subfamily. Homodimer.

Its subcellular location is the cytoplasm. It catalyses the reaction tRNA(Asp) + L-aspartate + ATP = L-aspartyl-tRNA(Asp) + AMP + diphosphate. Functionally, catalyzes the attachment of L-aspartate to tRNA(Asp) in a two-step reaction: L-aspartate is first activated by ATP to form Asp-AMP and then transferred to the acceptor end of tRNA(Asp). In Parabacteroides distasonis (strain ATCC 8503 / DSM 20701 / CIP 104284 / JCM 5825 / NCTC 11152), this protein is Aspartate--tRNA ligase.